The primary structure comprises 381 residues: CD2 homolog (381 aa).

The N-terminal stretch at Met-1–Ser-16 is a signal peptide. The Extracellular segment spans residues Ile-17 to Thr-208. Residues Asn-24, Asn-73, Asn-77, Asn-85, Asn-91, Asn-104, Asn-121, Asn-133, Asn-144, Asn-176, Asn-183, and Asn-189 are each glycosylated (N-linked (GlcNAc...) asparagine; by host). Disulfide bonds link Cys-122–Cys-190 and Cys-129–Cys-173. The helical transmembrane segment at Leu-209 to Ile-229 threads the bilayer. The Cytoplasmic segment spans residues Thr-230–Ile-381. Residues Glu-243–Pro-278 are disordered. The segment covering Gln-256–Pro-270 has biased composition (basic and acidic residues). Repeat copies occupy residues Lys-305–Pro-310, Lys-311–Pro-316, Lys-317–Pro-322, Lys-323–Pro-328, Lys-329–Pro-334, Lys-335–Pro-340, and Lys-341–Pro-346. A 7 X 6 AA tandem repeats of K-[LP]-C-[PRS]-[PS]-[PS] region spans residues Lys-305–Pro-334. Residues Lys-341–Pro-362 are disordered.

The protein belongs to the asfivirus CD2 homolog protein family. In terms of assembly, both glycosylated and nonglycosylated forms interact (via C-terminus) with the host AP-1 complex. Post-translationally, cleaved into two fragments of 63 kDa and 26 kDa containing respectively the glycosylated N-terminus and the nonglycosylated C-terminus. A full-length 89-kDa glycosylated form also exists.

The protein localises to the host membrane. The protein resides in the virion membrane. It is found in the host Golgi apparatus. Its function is as follows. May play an immunosuppressive role by inhibiting lymphocyte proliferation and subsequently facilitating viral replication and generalization of infection. Responsible for viral hemadsorption, which may help viral spread. Increases virus replication in the tick vector at the step of virus uptake or replication in the tick gut. May play a role in the host Golgi reorganization to yield viral factories. May play a role in host cell penetration. This chain is CD2 homolog, found in African swine fever virus (isolate Warthog/Namibia/Wart80/1980) (ASFV).